Consider the following 198-residue polypeptide: Thymidine kinase (198 aa).

ATP is bound by residues 9-16 (GTMNSGKS) and 85-88 (DEAQ). Glu-86 serves as the catalytic Proton acceptor. Positions 143, 146, 180, and 183 each coordinate Zn(2+).

The protein belongs to the thymidine kinase family. In terms of assembly, homotetramer.

It localises to the cytoplasm. The catalysed reaction is thymidine + ATP = dTMP + ADP + H(+). The protein is Thymidine kinase of Streptococcus thermophilus (strain ATCC BAA-250 / LMG 18311).